The sequence spans 413 residues: Serine--tRNA ligase (413 aa).

Thr-221–Glu-223 contributes to the L-serine binding site. Position 252–254 (Arg-252–Glu-254) interacts with ATP. Glu-275 contacts L-serine. Glu-339–Ser-342 contacts ATP. Ser-375 provides a ligand contact to L-serine.

It belongs to the class-II aminoacyl-tRNA synthetase family. Type-1 seryl-tRNA synthetase subfamily. In terms of assembly, homodimer. The tRNA molecule binds across the dimer.

The protein resides in the cytoplasm. It catalyses the reaction tRNA(Ser) + L-serine + ATP = L-seryl-tRNA(Ser) + AMP + diphosphate + H(+). The catalysed reaction is tRNA(Sec) + L-serine + ATP = L-seryl-tRNA(Sec) + AMP + diphosphate + H(+). Its pathway is aminoacyl-tRNA biosynthesis; selenocysteinyl-tRNA(Sec) biosynthesis; L-seryl-tRNA(Sec) from L-serine and tRNA(Sec): step 1/1. Functionally, catalyzes the attachment of serine to tRNA(Ser). Is also able to aminoacylate tRNA(Sec) with serine, to form the misacylated tRNA L-seryl-tRNA(Sec), which will be further converted into selenocysteinyl-tRNA(Sec). This is Serine--tRNA ligase from Dehalococcoides mccartyi (strain ATCC BAA-2100 / JCM 16839 / KCTC 5957 / BAV1).